Reading from the N-terminus, the 1040-residue chain is Multidrug resistance protein MdtB (1040 aa).

The next 11 membrane-spanning stretches (helical) occupy residues 15-37, 343-365, 369-391, 398-420, 440-462, 474-496, 535-557, 867-889, 909-931, 968-990, and 1000-1022; these read LFILRPVATTLLMIAILLAGIIG, VQFELLLAIALVVMVIYLFLRNA, LIPSIAVPLSLVGTFAAMYFLGF, LMALTIATGFVVDDAIVVIENIA, IGFTIISLTFSLIAVLIPLLFMG, VTLAVSILISAVVSLTLTPMMCA, HPWLTLSVALGTLLLTILLYIWI, VWLIVAAIVAMYIVLGVLYESFI, LMMAGKDLDVIAIIGIILLIGIV, ILMTTMAALLSALPLMLSTGVGA, and MVGGLIMSQILTLFTTPVIYLLF.

This sequence belongs to the resistance-nodulation-cell division (RND) (TC 2.A.6) family. MdtB subfamily. Part of a tripartite efflux system composed of MdtA, MdtB and MdtC. MdtB forms a heteromultimer with MdtC.

Its subcellular location is the cell inner membrane. In Pectobacterium atrosepticum (strain SCRI 1043 / ATCC BAA-672) (Erwinia carotovora subsp. atroseptica), this protein is Multidrug resistance protein MdtB.